A 201-amino-acid polypeptide reads, in one-letter code: Acireductone dioxygenase 2 (201 aa).

His83, His85, Glu89, and His129 together coordinate Fe(2+). Ni(2+)-binding residues include His83, His85, Glu89, and His129.

Belongs to the acireductone dioxygenase (ARD) family. Fe(2+) serves as cofactor. It depends on Ni(2+) as a cofactor.

The protein localises to the cytoplasm. It is found in the nucleus. The enzyme catalyses 1,2-dihydroxy-5-(methylsulfanyl)pent-1-en-3-one + O2 = 4-methylsulfanyl-2-oxobutanoate + formate + 2 H(+). It catalyses the reaction 1,2-dihydroxy-5-(methylsulfanyl)pent-1-en-3-one + O2 = 3-(methylsulfanyl)propanoate + CO + formate + 2 H(+). Its pathway is amino-acid biosynthesis; L-methionine biosynthesis via salvage pathway; L-methionine from S-methyl-5-thio-alpha-D-ribose 1-phosphate: step 5/6. In terms of biological role, catalyzes 2 different reactions between oxygen and the acireductone 1,2-dihydroxy-3-keto-5-methylthiopentene (DHK-MTPene) depending upon the metal bound in the active site. Fe-containing acireductone dioxygenase (Fe-ARD) produces formate and 2-keto-4-methylthiobutyrate (KMTB), the alpha-ketoacid precursor of methionine in the methionine recycle pathway. Ni-containing acireductone dioxygenase (Ni-ARD) produces methylthiopropionate, carbon monoxide and formate, and does not lie on the methionine recycle pathway. In Coprinopsis cinerea (strain Okayama-7 / 130 / ATCC MYA-4618 / FGSC 9003) (Inky cap fungus), this protein is Acireductone dioxygenase 2.